The following is a 199-amino-acid chain: Alkyl hydroperoxide reductase C (199 aa).

Residues 2–163 form the Thioredoxin domain; sequence VLVTYPAPDF…TLRMIDALHF (162 aa). The active-site Cysteine sulfenic acid (-SOH) intermediate is the Cys-50.

Belongs to the peroxiredoxin family. AhpC/Prx1 subfamily. Homodimer; disulfide-linked, upon oxidation. 5 homodimers assemble to form a ring-like decamer.

It is found in the cytoplasm. It carries out the reaction a hydroperoxide + NADH + H(+) = an alcohol + NAD(+) + H2O. Its function is as follows. Thiol-specific peroxidase that catalyzes the reduction of hydrogen peroxide and organic hydroperoxides to water and alcohols, respectively. Plays a role in cell protection against oxidative stress by detoxifying peroxides. The sequence is that of Alkyl hydroperoxide reductase C from Buchnera aphidicola subsp. Baizongia pistaciae (strain Bp).